Here is a 227-residue protein sequence, read N- to C-terminus: Small ribosomal subunit protein uS3 (227 aa).

The KH type-2 domain maps to 39 to 107 (VREFLDKRLV…PVHINIEEVR (69 aa)).

Belongs to the universal ribosomal protein uS3 family. As to quaternary structure, part of the 30S ribosomal subunit. Forms a tight complex with proteins S10 and S14.

Its function is as follows. Binds the lower part of the 30S subunit head. Binds mRNA in the 70S ribosome, positioning it for translation. The chain is Small ribosomal subunit protein uS3 from Marinobacter nauticus (strain ATCC 700491 / DSM 11845 / VT8) (Marinobacter aquaeolei).